The sequence spans 557 residues: MFS-type transporter clz4 (557 aa).

Transmembrane regions (helical) follow at residues 22–42 (LIIV…DHNG), 59–79 (SITW…VLYG), 89–109 (ALFV…GFAT), 120–140 (LTGA…TDVV), 150–170 (AVVA…AAGV), 179–199 (GLFW…GYIL), 217–237 (WLGS…VSGP), 245–265 (SLLV…FLFI), 269–289 (LATL…SALL), 319–339 (VISG…SMIA), 346–366 (SGQY…GSLL), 379–399 (VIIV…PMVI), 419–439 (FFRF…LQST), and 479–499 (HVYI…FVWK). Residues 505–523 (SRPTENNDDIEHAPARGIE) show a composition bias toward basic and acidic residues. The disordered stretch occupies residues 505 to 557 (SRPTENNDDIEHAPARGIEREDEQSSLIYDREPSAVSYGTVEAGEPNRLRRGG).

It belongs to the major facilitator superfamily. TCR/Tet family.

It is found in the membrane. Its function is as follows. MFS-type transporter; part of the gene cluster that mediates the biosynthesis of squalestatin S1 (SQS1, also known as zaragozic acid A), a heavily oxidized fungal polyketide that offers potent cholesterol lowering activity by targeting squalene synthase (SS). This is MFS-type transporter clz4 from Cochliobolus lunatus (Filamentous fungus).